Consider the following 220-residue polypeptide: Probable nicotinate-nucleotide adenylyltransferase (220 aa).

It belongs to the NadD family.

The enzyme catalyses nicotinate beta-D-ribonucleotide + ATP + H(+) = deamido-NAD(+) + diphosphate. It functions in the pathway cofactor biosynthesis; NAD(+) biosynthesis; deamido-NAD(+) from nicotinate D-ribonucleotide: step 1/1. Functionally, catalyzes the reversible adenylation of nicotinate mononucleotide (NaMN) to nicotinic acid adenine dinucleotide (NaAD). This Serratia proteamaculans (strain 568) protein is Probable nicotinate-nucleotide adenylyltransferase.